Here is a 286-residue protein sequence, read N- to C-terminus: tRNA uridine(34) hydroxylase (286 aa).

The 96-residue stretch at 130-225 (RGDDVVFFDG…YGETFGDRGL (96 aa)) folds into the Rhodanese domain. Residue Cys-185 is the Cysteine persulfide intermediate of the active site.

This sequence belongs to the TrhO family.

It catalyses the reaction uridine(34) in tRNA + AH2 + O2 = 5-hydroxyuridine(34) in tRNA + A + H2O. Its function is as follows. Catalyzes oxygen-dependent 5-hydroxyuridine (ho5U) modification at position 34 in tRNAs. The chain is tRNA uridine(34) hydroxylase from Rhodococcus erythropolis (strain PR4 / NBRC 100887).